The primary structure comprises 618 residues: Protease 4 (618 aa).

Residues 1 to 24 (MRTLWRFIAGFFKWTWRLLNFVRE) lie on the Cytoplasmic side of the membrane. A helical transmembrane segment spans residues 25–45 (MVLNLFFIFLVLVGVGIWMQV). Topologically, residues 46–618 (SGGDSKETAS…AFCLTCANMR (573 aa)) are periplasmic. Catalysis depends on lysine 209, which acts as the Proton donor/acceptor. Catalysis depends on serine 409, which acts as the Nucleophile.

This sequence belongs to the peptidase S49 family. As to quaternary structure, homotetramer.

Its subcellular location is the cell inner membrane. Inhibited by serine hydrolase inhibitor FP-biotin and by antipain. Its function is as follows. Digests cleaved signal peptides in vitro, its in vivo function is unknown. This activity is necessary to maintain proper secretion of mature proteins across the membrane. This chain is Protease 4 (sppA), found in Escherichia coli (strain K12).